The primary structure comprises 481 residues: Rhamnogalacturonan I rhamnosyltransferase 4 (481 aa).

Residues 33 to 55 form a helical; Signal-anchor for type II membrane protein membrane-spanning segment; sequence VWFFRVCSCILVWTCLIQLFWHS. Asn-85 and Asn-118 each carry an N-linked (GlcNAc...) asparagine glycan. Position 258 to 260 (258 to 260) interacts with substrate; the sequence is HLR. N-linked (GlcNAc...) asparagine glycosylation is found at Asn-372 and Asn-432.

Belongs to the glycosyltransferase GT106 family.

Its subcellular location is the golgi apparatus membrane. It carries out the reaction alpha-D-galacturonosyl-[(1-&gt;2)-alpha-L-rhamnosyl-(1-&gt;4)-alpha-D-galacturonosyl](n) + UDP-beta-L-rhamnose = [(1-&gt;2)-alpha-L-rhamnosyl-(1-&gt;4)-alpha-D-galacturonosyl](n+1) + UDP + H(+). It functions in the pathway glycan metabolism; pectin biosynthesis. Glycosyltransferase involved in the formation of rhamnogalacturonan I (RG-I) oligosaccharides in the seed coat mucilage, which is a specialized cell wall with abundant RG-I. Transfers the rhamnose residue from UDP-beta-L-rhamnose to RG-I oligosaccharides. The sequence is that of Rhamnogalacturonan I rhamnosyltransferase 4 from Arabidopsis thaliana (Mouse-ear cress).